A 770-amino-acid polypeptide reads, in one-letter code: Kinesin-like protein klpA (770 aa).

The interval 1 to 152 (MENVQSRMQG…GLGKRGEWDQ (152 aa)) is disordered. Low complexity predominate over residues 85–105 (SSTLTRSASAASRPRGPLSSS). Positions 106-119 (TSGRPKTSMSTSRR) are enriched in polar residues. The segment covering 134-152 (THQEERSYGGLGKRGEWDQ) has biased composition (basic and acidic residues). A coiled-coil region spans residues 175–425 (QESSGLKDAL…QELKGNIRVF (251 aa)). Positions 421 to 756 (NIRVFCRVRP…LKFATKVHNT (336 aa)) constitute a Kinesin motor domain. 514 to 521 (GQTGSGKT) lines the ATP pocket.

The protein belongs to the TRAFAC class myosin-kinesin ATPase superfamily. Kinesin family. NCD subfamily.

It is found in the cytoplasm. The protein localises to the cytoskeleton. In Emericella nidulans (strain FGSC A4 / ATCC 38163 / CBS 112.46 / NRRL 194 / M139) (Aspergillus nidulans), this protein is Kinesin-like protein klpA (klpA).